Consider the following 420-residue polypeptide: Cyclin-B2-1 (420 aa).

Residues 1-61 (MDRASENRRL…EKSGKEEQKP (61 aa)) form a disordered region. Over residues 49 to 60 (PMLEKSGKEEQK) the composition is skewed to basic and acidic residues.

It belongs to the cyclin family. Cyclin AB subfamily. In terms of assembly, interacts with CDKB2-1. As to expression, expressed in the root apices.

Functionally, involved in the control of the cell cycle at the G2/M (mitosis) transition. May activate CDKB2-1 kinase. The polypeptide is Cyclin-B2-1 (CYCB2-1) (Oryza sativa subsp. japonica (Rice)).